The primary structure comprises 591 residues: Transcriptional regulator PUL4 (591 aa).

The zn(2)-C6 fungal-type DNA-binding region spans 3 to 29 (CLECKKRKQKCDGQKPCRRCTKLNVKC).

Its subcellular location is the nucleus. Its function is as follows. Transcription factor involved in regulation of the PUL gene cluster that mediates the formation of pulcherrimin, a red iron-containing pigment composed of two cyclized and modified leucine molecules that acts as a siderophore, a chelator that binds iron outside the cell for subsequent uptake. The sequence is that of Transcriptional regulator PUL4 from Kluyveromyces lactis (strain ATCC 8585 / CBS 2359 / DSM 70799 / NBRC 1267 / NRRL Y-1140 / WM37) (Yeast).